The chain runs to 143 residues: Large ribosomal subunit protein uL15 (143 aa).

Residues 1-56 (MQLNSIKPAAGAKHAKRRVGRGIGSGLGKTAGRGHKGQKSRAGGYHKVGFEGGQMP) form a disordered region. Over residues 21-31 (RGIGSGLGKTA) the composition is skewed to gly residues.

Belongs to the universal ribosomal protein uL15 family. In terms of assembly, part of the 50S ribosomal subunit.

Functionally, binds to the 23S rRNA. The chain is Large ribosomal subunit protein uL15 from Verminephrobacter eiseniae (strain EF01-2).